The sequence spans 404 residues: MDMQADEMYRQDPLGSCGNPRQVSHITGRLSSLLGELPATWIEGEVTQLSPRRIGVFLTLKDMNESKHLEFFLPFDAFKDEVEVGNRVKIHGKLEFWATSGQIKVKGFEIQSVGIGELIERIARLRVQLALEGLYEHKRPLPFIPKLIGLVTGQNSDAEKDVVTNVLLRWPAAKFCTIYASMQGASCVSETISAIQKLDANNDVDVIIVARGGGSFHDLIGFSDEQMIRAVFAIKTPLISAIGHEADRPILDEVADLRASTPTDAAKRVVPDIADEKRLIKSAMSFLKKSYEPVIDKIKCDTLSWSQAFSNPFETFIAPRRREIDLFYQQMLTVVWANFSKTETEIAAIKKHLLAISPQNTLVRGYAMIEDETGRIISSADKLSAGDTVTLRLHDGLVRAEITQ.

The protein belongs to the XseA family. As to quaternary structure, heterooligomer composed of large and small subunits.

The protein resides in the cytoplasm. It carries out the reaction Exonucleolytic cleavage in either 5'- to 3'- or 3'- to 5'-direction to yield nucleoside 5'-phosphates.. Bidirectionally degrades single-stranded DNA into large acid-insoluble oligonucleotides, which are then degraded further into small acid-soluble oligonucleotides. The sequence is that of Exodeoxyribonuclease 7 large subunit from Tropheryma whipplei (strain TW08/27) (Whipple's bacillus).